The chain runs to 117 residues: Immunoglobulin heavy variable 1-58 (117 aa).

The N-terminal stretch at 1–19 (MDWIWRILFLVGAATGAHS) is a signal peptide. Residues 20 to 44 (QMQLVQSGPEVKKPGTSVKVSCKAS) form a framework-1 region. The Ig-like domain maps to 20-117 (QMQLVQSGPE…EDTAVYYCAA (98 aa)). Cysteines 41 and 115 form a disulfide. Residues 45-52 (GFTFTSSA) form a complementarity-determining-1 region. The framework-2 stretch occupies residues 53–69 (VQWVRQARGQRLEWIGW). The segment at 70 to 77 (IVVGSGNT) is complementarity-determining-2. Residues 78–115 (NYAQKFQERVTITRDMSTSTAYMELSSLRSEDTAVYYC) are framework-3. Residues 116-117 (AA) form a complementarity-determining-3 region.

In terms of assembly, immunoglobulins are composed of two identical heavy chains and two identical light chains; disulfide-linked.

It localises to the secreted. The protein resides in the cell membrane. Its function is as follows. V region of the variable domain of immunoglobulin heavy chains that participates in the antigen recognition. Immunoglobulins, also known as antibodies, are membrane-bound or secreted glycoproteins produced by B lymphocytes. In the recognition phase of humoral immunity, the membrane-bound immunoglobulins serve as receptors which, upon binding of a specific antigen, trigger the clonal expansion and differentiation of B lymphocytes into immunoglobulins-secreting plasma cells. Secreted immunoglobulins mediate the effector phase of humoral immunity, which results in the elimination of bound antigens. The antigen binding site is formed by the variable domain of one heavy chain, together with that of its associated light chain. Thus, each immunoglobulin has two antigen binding sites with remarkable affinity for a particular antigen. The variable domains are assembled by a process called V-(D)-J rearrangement and can then be subjected to somatic hypermutations which, after exposure to antigen and selection, allow affinity maturation for a particular antigen. In Homo sapiens (Human), this protein is Immunoglobulin heavy variable 1-58.